A 488-amino-acid polypeptide reads, in one-letter code: Thiamine transporter 2 (488 aa).

Residues 1–8 (MDSSCRTP) lie on the Cytoplasmic side of the membrane. A helical transmembrane segment spans residues 9 to 29 (PSNSWVYPTVILCLFGFFSMF). Over 30–54 (RPSEAFLIPFLSEPSKNLTSPEMTN) the chain is Extracellular. Asn46 carries N-linked (GlcNAc...) asparagine glycosylation. Residues 55 to 75 (EILPVWTYSYLATLPPVFVLT) traverse the membrane as a helical segment. Residues 76-82 (DYLRYKP) are Cytoplasmic-facing. Residues 83–103 (VIMLHVVAFATSYLFLLFGQG) traverse the membrane as a helical segment. Topologically, residues 104 to 111 (VMLMQTAE) are extracellular. A helical membrane pass occupies residues 112–132 (FFFGVVSATEIAYFAYIYSMV). At 133 to 145 (SPEHYQKVSSYCR) the chain is on the cytoplasmic side. The chain crosses the membrane as a helical span at residues 146-166 (SITLVAYTAGSVLAQLLVSLT). Residues 167 to 172 (NLPYSS) lie on the Extracellular side of the membrane. The helical transmembrane segment at 173-193 (LFYISLACVSVAFFFSLFLPM) threads the bilayer. The Cytoplasmic portion of the chain corresponds to 194 to 276 (PKKSMFFHAK…YSSKHLVYWS (83 aa)). Residues 277-297 (LWWAFATAGYNQILNYVQVLW) form a helical membrane-spanning segment. The Extracellular portion of the chain corresponds to 298–310 (EHKAPSQDSSIYN). The chain crosses the membrane as a helical span at residues 311–331 (GAVEAIATFGGALASFSVGYL). The Cytoplasmic segment spans residues 332–335 (KVNW). The chain crosses the membrane as a helical span at residues 336–356 (DLLGELGLAVFSAVIAGSLFL). At 357–369 (MNYSRSIWVCYAG) the chain is on the extracellular side. Residue Asn358 is glycosylated (N-linked (GlcNAc...) asparagine). A helical transmembrane segment spans residues 370–390 (YLLVKSSYSFLITIAVFQIAV). At 391–399 (NLSLERYAL) the chain is on the cytoplasmic side. A helical membrane pass occupies residues 400-420 (VFGIDTFIALVIQTIMTMIVV). At 421 to 428 (DQRGLQLP) the chain is on the extracellular side. The chain crosses the membrane as a helical span at residues 429-449 (VTTQFLVYGSYFAVIAGVFLM). Residues 450–488 (RSIYILCSAKCRKEVQNLATTRSPNEPHPQEPSNVSTKF) are Cytoplasmic-facing. The interval 469 to 488 (TTRSPNEPHPQEPSNVSTKF) is disordered.

Belongs to the reduced folate carrier (RFC) transporter (TC 2.A.48) family. As to expression, high expression in kidney, brain, lung and small intestine. Detected in pancreatic acinar cells (at protein level). Also expressed strongly in pancreatic islet cells.

The protein localises to the membrane. The enzyme catalyses thiamine(out) + H(+)(in) = thiamine(in) + H(+)(out). In terms of biological role, high-affinity transporter for the intake of thiamine. Unlike the human ortholog, lacks H(+)-dependent pyridoxine transport activity due to an absence of seven critical amino-acids required for pyridoxine transport. This Mus musculus (Mouse) protein is Thiamine transporter 2 (Slc19a3).